Consider the following 1481-residue polypeptide: Chromosome partition protein MukB (1481 aa).

ATP is bound at residue 34–41 (GGNGAGKS). Coiled-coil stretches lie at residues 338 to 480 (SLVQ…QAYQ), 509 to 604 (QHLA…APVW), 780 to 805 (RAAR…ATLS), 835 to 1116 (EAEI…AKAG), and 1210 to 1265 (EAIE…LQAV). Residues 666-783 (PSGAEDSRMI…EVPLFGRAAR (118 aa)) form a flexible hinge region.

Belongs to the SMC family. MukB subfamily. As to quaternary structure, homodimerization via its hinge domain. Binds to DNA via its C-terminal region. Interacts, and probably forms a ternary complex, with MukE and MukF via its C-terminal region. The complex formation is stimulated by calcium or magnesium. Interacts with tubulin-related protein FtsZ.

It localises to the cytoplasm. The protein localises to the nucleoid. In terms of biological role, plays a central role in chromosome condensation, segregation and cell cycle progression. Functions as a homodimer, which is essential for chromosome partition. Involved in negative DNA supercoiling in vivo, and by this means organize and compact chromosomes. May achieve or facilitate chromosome segregation by condensation DNA from both sides of a centrally located replisome during cell division. The protein is Chromosome partition protein MukB of Yersinia enterocolitica serotype O:8 / biotype 1B (strain NCTC 13174 / 8081).